A 402-amino-acid chain; its full sequence is Probable 2,3-bisphosphoglycerate-independent phosphoglycerate mutase (402 aa).

Belongs to the BPG-independent phosphoglycerate mutase family. A-PGAM subfamily.

It carries out the reaction (2R)-2-phosphoglycerate = (2R)-3-phosphoglycerate. It participates in carbohydrate degradation; glycolysis; pyruvate from D-glyceraldehyde 3-phosphate: step 3/5. Catalyzes the interconversion of 2-phosphoglycerate and 3-phosphoglycerate. The sequence is that of Probable 2,3-bisphosphoglycerate-independent phosphoglycerate mutase from Thermosipho melanesiensis (strain DSM 12029 / CIP 104789 / BI429).